We begin with the raw amino-acid sequence, 671 residues long: Archaeal Rqc2 homolog aRqcH (671 aa).

Coiled-coil stretches lie at residues 291-363 (KVVV…ARIK) and 410-465 (RKNA…MQMK).

Belongs to the NEMF family. As to quaternary structure, associates with stalled 50S ribosomal subunits.

In terms of biological role, probably part of the ribosome quality control system (RQC). May mediate the addition of alanine residues (Ala tailing) to incompletely synthesized nascent chains from stalled ribosomes, leading to their degradation. This Methanocaldococcus jannaschii (strain ATCC 43067 / DSM 2661 / JAL-1 / JCM 10045 / NBRC 100440) (Methanococcus jannaschii) protein is Archaeal Rqc2 homolog aRqcH.